Here is a 123-residue protein sequence, read N- to C-terminus: Prostate stem cell antigen (123 aa).

The N-terminal stretch at 1–20 (MKTVFFLLLATYLALHPGAA) is a signal peptide. The UPAR/Ly6 domain occupies 21 to 95 (LQCYSCTAQM…CCYSDLCNVN (75 aa)). Cystine bridges form between Cys-23-Cys-48, Cys-26-Cys-35, Cys-41-Cys-66, Cys-70-Cys-86, and Cys-87-Cys-92. An N-linked (GlcNAc...) asparagine glycan is attached at Asn-40. Residue Asn-95 is the site of GPI-anchor amidated asparagine attachment. The propeptide at 96–123 (GAHTLKPPTTLGLLTVLCSLLLWGSSRL) is removed in mature form.

Interacts with CHRNA4. As to expression, predominantly expressed in prostate. Also found in spleen, liver, lung, prostate, kidney and testis. Expressed in brain cortex; expression is increased in transgenic mouse model of Alzheimer disease (at protein level).

It is found in the cell membrane. May be involved in the regulation of cell proliferation. Its function is as follows. May act as a modulator of nicotinic acetylcholine receptors (nAChRs) activity. In vitro inhibits nicotine-induced signaling probably implicating alpha-3:beta-2- or alpha-7-containing nAChRs. This chain is Prostate stem cell antigen (Psca), found in Mus musculus (Mouse).